A 707-amino-acid polypeptide reads, in one-letter code: Ribosomal RNA large subunit methyltransferase K/L (707 aa).

The THUMP domain occupies 43 to 154; that stretch reads QIYRCCLWSR…KDKAILGVDM (112 aa).

The protein belongs to the methyltransferase superfamily. RlmKL family.

The protein resides in the cytoplasm. It carries out the reaction guanosine(2445) in 23S rRNA + S-adenosyl-L-methionine = N(2)-methylguanosine(2445) in 23S rRNA + S-adenosyl-L-homocysteine + H(+). The catalysed reaction is guanosine(2069) in 23S rRNA + S-adenosyl-L-methionine = N(2)-methylguanosine(2069) in 23S rRNA + S-adenosyl-L-homocysteine + H(+). Its function is as follows. Specifically methylates the guanine in position 2445 (m2G2445) and the guanine in position 2069 (m7G2069) of 23S rRNA. The protein is Ribosomal RNA large subunit methyltransferase K/L of Vibrio parahaemolyticus serotype O3:K6 (strain RIMD 2210633).